The following is a 507-amino-acid chain: ATP synthase subunit alpha, chloroplastic (507 aa).

170 to 177 is a binding site for ATP; it reads GDRQTGKT. A Phosphothreonine modification is found at threonine 257.

The protein belongs to the ATPase alpha/beta chains family. As to quaternary structure, F-type ATPases have 2 components, CF(1) - the catalytic core - and CF(0) - the membrane proton channel. CF(1) has five subunits: alpha(3), beta(3), gamma(1), delta(1), epsilon(1). CF(0) has four main subunits: a, b, b' and c.

The protein resides in the plastid. The protein localises to the chloroplast thylakoid membrane. The enzyme catalyses ATP + H2O + 4 H(+)(in) = ADP + phosphate + 5 H(+)(out). In terms of biological role, produces ATP from ADP in the presence of a proton gradient across the membrane. The alpha chain is a regulatory subunit. The sequence is that of ATP synthase subunit alpha, chloroplastic from Lepidium virginicum (Virginia pepperweed).